A 341-amino-acid chain; its full sequence is tRNA N6-adenosine threonylcarbamoyltransferase (341 aa).

The Fe cation site is built by histidine 111 and histidine 115. Substrate-binding positions include leucine 134 to glycine 138, aspartate 167, glycine 180, and asparagine 276. Aspartate 304 lines the Fe cation pocket.

It belongs to the KAE1 / TsaD family. Fe(2+) is required as a cofactor.

Its subcellular location is the cytoplasm. It carries out the reaction L-threonylcarbamoyladenylate + adenosine(37) in tRNA = N(6)-L-threonylcarbamoyladenosine(37) in tRNA + AMP + H(+). Functionally, required for the formation of a threonylcarbamoyl group on adenosine at position 37 (t(6)A37) in tRNAs that read codons beginning with adenine. Is involved in the transfer of the threonylcarbamoyl moiety of threonylcarbamoyl-AMP (TC-AMP) to the N6 group of A37, together with TsaE and TsaB. TsaD likely plays a direct catalytic role in this reaction. This Pseudomonas aeruginosa (strain UCBPP-PA14) protein is tRNA N6-adenosine threonylcarbamoyltransferase.